The following is a 130-amino-acid chain: Large ribosomal subunit protein bL17 (130 aa).

The protein belongs to the bacterial ribosomal protein bL17 family. Part of the 50S ribosomal subunit. Contacts protein L32.

This Azotobacter vinelandii (strain DJ / ATCC BAA-1303) protein is Large ribosomal subunit protein bL17.